The following is a 215-amino-acid chain: Oligoribonuclease (215 aa).

The region spanning 5–170 is the Exonuclease domain; the sequence is LVWIDCEMTG…ADIHESIREL (166 aa). Tyrosine 127 is a catalytic residue. A disordered region spans residues 196–215; that stretch reads LSDGAGAQEETDSAEAPQSG.

It belongs to the oligoribonuclease family.

The protein localises to the cytoplasm. Functionally, 3'-to-5' exoribonuclease specific for small oligoribonucleotides. The sequence is that of Oligoribonuclease from Mycobacterium bovis (strain BCG / Pasteur 1173P2).